Here is a 620-residue protein sequence, read N- to C-terminus: E3 ubiquitin-protein ligase AMFR (620 aa).

The next 7 helical transmembrane spans lie at 75–95, 115–135, 138–158, 179–199, 201–221, 247–267, and 269–289; these read LFVW…GKVI, FWNF…VQRV, VVLW…VQLC, VLAL…LCAL, GHIH…LVTV, SSYI…LDLM, and HIHM…VIFM. An RING-type; atypical zinc finger spans residues 334–372; that stretch reads CAICWDSMTTARKLPCGHLFHNSCLRSWLEQDTSCPTCR. A CUE domain is found at 449-491; it reads QLNGMAHQIQEMFPQVPYHLILQDLQLTRSVEVTTDNILEGRI. The span at 510-526 shows a compositional bias: low complexity; it reads ASEDGAGASSGSEVAAP. Disordered stretches follow at residues 510-544 and 569-598; these read ASED…SADE and PEDG…DSVT. The segment covering 531–544 has biased composition (basic and acidic residues); sequence FEVRGSRFSKSADE. Residues 581-595 are compositionally biased toward acidic residues; sequence DNDDSVPSIEDEDSD.

As to expression, widely expressed.

It localises to the endoplasmic reticulum membrane. It catalyses the reaction [E2 ubiquitin-conjugating enzyme]-S-ubiquitinyl-L-cysteine + [acceptor protein]-L-cysteine = [E2 ubiquitin-conjugating enzyme]-L-cysteine + [acceptor protein]-S-ubiquitinyl-L-cysteine.. It participates in protein modification; protein ubiquitination. Functionally, E3 ubiquitin-protein ligase that mediates the polyubiquitination of lysine and cysteine residues on target proteins. May participate in the final step of endoplasmic reticulum-associated degradation (ERAD). Required for proper lipid homeostasis. In Danio rerio (Zebrafish), this protein is E3 ubiquitin-protein ligase AMFR.